Reading from the N-terminus, the 358-residue chain is 4-hydroxy-2-oxovalerate aldolase 2 (358 aa).

Positions 16 to 268 (VLLHDMCLRD…ETGVDLFKLM (253 aa)) constitute a Pyruvate carboxyltransferase domain. 24–25 (RD) lines the substrate pocket. Residue aspartate 25 coordinates Mn(2+). The active-site Proton acceptor is histidine 28. Serine 178 and histidine 207 together coordinate substrate. Residues histidine 207 and histidine 209 each contribute to the Mn(2+) site. Substrate is bound at residue tyrosine 298.

The protein belongs to the 4-hydroxy-2-oxovalerate aldolase family.

It catalyses the reaction (S)-4-hydroxy-2-oxopentanoate = acetaldehyde + pyruvate. This Methylibium petroleiphilum (strain ATCC BAA-1232 / LMG 22953 / PM1) protein is 4-hydroxy-2-oxovalerate aldolase 2.